The sequence spans 512 residues: Ribose import ATP-binding protein RbsA 1 (512 aa).

2 ABC transporter domains span residues 8–244 (FRME…IGRE) and 257–502 (PEEK…LNIG). 40-47 (GENGAGKS) provides a ligand contact to ATP.

This sequence belongs to the ABC transporter superfamily. Ribose importer (TC 3.A.1.2.1) family. As to quaternary structure, the complex is composed of an ATP-binding protein (RbsA), two transmembrane proteins (RbsC) and a solute-binding protein (RbsB).

Its subcellular location is the cell inner membrane. The catalysed reaction is D-ribose(out) + ATP + H2O = D-ribose(in) + ADP + phosphate + H(+). Functionally, part of the ABC transporter complex RbsABC involved in ribose import. Responsible for energy coupling to the transport system. The sequence is that of Ribose import ATP-binding protein RbsA 1 from Rhizobium etli (strain ATCC 51251 / DSM 11541 / JCM 21823 / NBRC 15573 / CFN 42).